We begin with the raw amino-acid sequence, 63 residues long: Kappa-theraphotoxin-Gr3a (63 aa).

Residues 1–21 form the signal peptide; it reads MKTSVFVLVLGLVLLFAVSFA. The propeptide occupies 22 to 29; that stretch reads TEMEESAR. 3 disulfides stabilise this stretch: C31/C45, C38/C50, and C44/C57.

It belongs to the neurotoxin 10 (Hwtx-1) family. 63 (VsTx1) subfamily. Expressed by the venom gland.

The protein resides in the secreted. Inhibits sodium channels Nav1.7/SCN9A and potassium channels Kv11.1/KCNH2. Also binds the voltage-sensor domain of the potassium channel KvAP (from the archaeon Aeropyrum pernix) with very slow apparent binding kinetics and affects channel gating. Reaches its target by dynamically partitioning into anionic or zwitterionic headgroup lipid membranes. May bind to the open state of KvAP. The chain is Kappa-theraphotoxin-Gr3a from Grammostola rosea (Chilean rose tarantula).